The following is a 637-amino-acid chain: 1-deoxy-D-xylulose-5-phosphate synthase (637 aa).

Thiamine diphosphate-binding positions include His71 and 112 to 114 (SHA). Asp144 serves as a coordination point for Mg(2+). Residues 145–146 (GA), Asn173, Tyr284, and Glu365 contribute to the thiamine diphosphate site. Mg(2+) is bound at residue Asn173.

The protein belongs to the transketolase family. DXPS subfamily. Homodimer. Mg(2+) serves as cofactor. The cofactor is thiamine diphosphate.

It carries out the reaction D-glyceraldehyde 3-phosphate + pyruvate + H(+) = 1-deoxy-D-xylulose 5-phosphate + CO2. Its pathway is metabolic intermediate biosynthesis; 1-deoxy-D-xylulose 5-phosphate biosynthesis; 1-deoxy-D-xylulose 5-phosphate from D-glyceraldehyde 3-phosphate and pyruvate: step 1/1. Catalyzes the acyloin condensation reaction between C atoms 2 and 3 of pyruvate and glyceraldehyde 3-phosphate to yield 1-deoxy-D-xylulose-5-phosphate (DXP). This is 1-deoxy-D-xylulose-5-phosphate synthase from Mycolicibacterium gilvum (strain PYR-GCK) (Mycobacterium gilvum (strain PYR-GCK)).